We begin with the raw amino-acid sequence, 390 residues long: Altered inheritance of mitochondria protein 6 (390 aa).

A signal peptide spans 1–26 (MLGLKGCLTILIGYVIAVCALFSSRG).

The protein belongs to the AIM6 family.

The chain is Altered inheritance of mitochondria protein 6 (AIM6) from Saccharomyces cerevisiae (strain RM11-1a) (Baker's yeast).